A 70-amino-acid chain; its full sequence is NADH dehydrogenase [ubiquinone] 1 alpha subcomplex subunit 1 (70 aa).

The chain crosses the membrane as a helical span at residues 1 to 21; that stretch reads MWFEILPGLAIMGVCLVIPGV.

The protein belongs to the complex I NDUFA1 subunit family. As to quaternary structure, complex I is composed of 45 different subunits.

The protein localises to the mitochondrion inner membrane. In terms of biological role, accessory subunit of the mitochondrial membrane respiratory chain NADH dehydrogenase (Complex I), that is believed not to be involved in catalysis. Complex I functions in the transfer of electrons from NADH to the respiratory chain. The immediate electron acceptor for the enzyme is believed to be ubiquinone. This Mus musculus (Mouse) protein is NADH dehydrogenase [ubiquinone] 1 alpha subcomplex subunit 1 (Ndufa1).